Here is a 252-residue protein sequence, read N- to C-terminus: MVSGMICKAVVLVFGILYPAYNSYKAVRTKNVKEYVRWMMYWIVFALYTVTETIADLTVSWFPLYFELKIAFVVWLLSPYTRGASLLYRKFLHPLLSSKEKEIDDYIVQAKEKGYETMVNFGKQGLNLAANAAVTAAVKSQGAITERLRSFSMHDLTDVQGDETAETRFFPDGQKKPRASVSDSSGFSSLRKDSGDDRTDEDVEVNSEDEVYSQKGLRRSQSMRSVKVIKGRKEIRYGSLKHKPKKRPQLYF.

3 helical membrane passes run 1-21 (MVSGMICKAVVLVFGILYPAY), 35-55 (YVRWMMYWIVFALYTVTETIA), and 57-77 (LTVSWFPLYFELKIAFVVWLL). The tract at residues 163–225 (ETAETRFFPD…GLRRSQSMRS (63 aa)) is disordered. The span at 198 to 211 (RTDEDVEVNSEDEV) shows a compositional bias: acidic residues.

The protein belongs to the DP1 family.

It localises to the endoplasmic reticulum membrane. In terms of biological role, microtubule-binding protein required to ensure proper cell division and nuclear envelope reassembly by sequestering the endoplasmic reticulum away from chromosomes during mitosis. Probably acts by clearing the endoplasmic reticulum membrane from metaphase chromosomes. The sequence is that of Receptor expression-enhancing protein 3-B (reep3-b) from Xenopus laevis (African clawed frog).